Here is an 869-residue protein sequence, read N- to C-terminus: DNA mismatch repair protein MutS (869 aa).

Residue 602–609 (GPNMSGKS) participates in ATP binding.

The protein belongs to the DNA mismatch repair MutS family.

This protein is involved in the repair of mismatches in DNA. It is possible that it carries out the mismatch recognition step. This protein has a weak ATPase activity. The polypeptide is DNA mismatch repair protein MutS (Staphylococcus carnosus (strain TM300)).